Consider the following 706-residue polypeptide: Elongation factor G (706 aa).

In terms of domain architecture, tr-type G spans 12-288 (EKTRNIGIMA…GVTNYLPSPN (277 aa)). Residues 21 to 28 (AHIDAGKT), 85 to 89 (DTPGH), and 139 to 142 (NKMD) each bind GTP. The tract at residues 288-309 (NDVPAITGHHPQDKEEDITRHP) is disordered. Over residues 297-309 (HPQDKEEDITRHP) the composition is skewed to basic and acidic residues.

This sequence belongs to the TRAFAC class translation factor GTPase superfamily. Classic translation factor GTPase family. EF-G/EF-2 subfamily.

The protein localises to the cytoplasm. Its function is as follows. Catalyzes the GTP-dependent ribosomal translocation step during translation elongation. During this step, the ribosome changes from the pre-translocational (PRE) to the post-translocational (POST) state as the newly formed A-site-bound peptidyl-tRNA and P-site-bound deacylated tRNA move to the P and E sites, respectively. Catalyzes the coordinated movement of the two tRNA molecules, the mRNA and conformational changes in the ribosome. This Salinibacter ruber (strain DSM 13855 / M31) protein is Elongation factor G.